A 347-amino-acid polypeptide reads, in one-letter code: uncharacterized protein (347 aa).

Residues D207, D218, H279, E312, and E326 each coordinate Mn(2+).

This sequence belongs to the peptidase M24B family. It depends on Mn(2+) as a cofactor.

This is an uncharacterized protein from Methanocaldococcus jannaschii (strain ATCC 43067 / DSM 2661 / JAL-1 / JCM 10045 / NBRC 100440) (Methanococcus jannaschii).